We begin with the raw amino-acid sequence, 111 residues long: Putative splicing factor C222.18 (111 aa).

Positions 18-95 (HTLYIRNFGT…DIIFVEWAKS (78 aa)) constitute an RRM domain.

Belongs to the splicing factor SR family.

The protein localises to the nucleus. In terms of biological role, has a role in pre-mRNA splicing where it is involved in spliceosome assembly. The chain is Putative splicing factor C222.18 from Schizosaccharomyces pombe (strain 972 / ATCC 24843) (Fission yeast).